Consider the following 82-residue polypeptide: Small ribosomal subunit protein bS16 (82 aa).

The protein belongs to the bacterial ribosomal protein bS16 family.

This chain is Small ribosomal subunit protein bS16, found in Shigella boydii serotype 18 (strain CDC 3083-94 / BS512).